Here is a 101-residue protein sequence, read N- to C-terminus: NAD(P)H-quinone oxidoreductase subunit 4L, chloroplastic (101 aa).

Transmembrane regions (helical) follow at residues I2–I22, M32–F52, and I61–V81.

This sequence belongs to the complex I subunit 4L family. As to quaternary structure, NDH is composed of at least 16 different subunits, 5 of which are encoded in the nucleus.

It localises to the plastid. The protein resides in the chloroplast thylakoid membrane. It catalyses the reaction a plastoquinone + NADH + (n+1) H(+)(in) = a plastoquinol + NAD(+) + n H(+)(out). It carries out the reaction a plastoquinone + NADPH + (n+1) H(+)(in) = a plastoquinol + NADP(+) + n H(+)(out). NDH shuttles electrons from NAD(P)H:plastoquinone, via FMN and iron-sulfur (Fe-S) centers, to quinones in the photosynthetic chain and possibly in a chloroplast respiratory chain. The immediate electron acceptor for the enzyme in this species is believed to be plastoquinone. Couples the redox reaction to proton translocation, and thus conserves the redox energy in a proton gradient. This is NAD(P)H-quinone oxidoreductase subunit 4L, chloroplastic from Lepidium virginicum (Virginia pepperweed).